Reading from the N-terminus, the 189-residue chain is Threonylcarbamoyl-AMP synthase (189 aa).

A YrdC-like domain is found at 7–189 (NPRVNYAANM…LLTGQVVRPS (183 aa)).

It belongs to the SUA5 family. TsaC subfamily.

Its subcellular location is the cytoplasm. It catalyses the reaction L-threonine + hydrogencarbonate + ATP = L-threonylcarbamoyladenylate + diphosphate + H2O. Functionally, required for the formation of a threonylcarbamoyl group on adenosine at position 37 (t(6)A37) in tRNAs that read codons beginning with adenine. Catalyzes the conversion of L-threonine, HCO(3)(-)/CO(2) and ATP to give threonylcarbamoyl-AMP (TC-AMP) as the acyladenylate intermediate, with the release of diphosphate. The polypeptide is Threonylcarbamoyl-AMP synthase (Cellvibrio japonicus (strain Ueda107) (Pseudomonas fluorescens subsp. cellulosa)).